The chain runs to 445 residues: MNTSPVRMDDLPLNRFHCRIAALTFGAHLTDGYVLGVIGYAIIQLTPAMQLTPFMAGMIGGSALLGLFLGSLVLGWISDHIGRQKIFTFSFLLITLASFLQFFATTPEHLIGLRILIGIGLGGDYSVGHTLLAEFSPRRHRGILLGAFSVVWTVGYVLASIAGHHFISENPEAWRWLLASAALPALLITLLRWGTPESPRWLLRQGRFAEAHAIVHRYFGPHVLLGDEVVTATHKHIKTLFSSRYWRRTAFNSVFFVCLVIPWFVIYTWLPTIAQTIGLEDALTASLMLNALLIVGALLGLVLTHLLAHRKFLLGSFLLLAATLVVMACLPSGSSLTLLLFVLFSTTISAVSNLVGILPAESFPTDIRSLGVGFATAMSRLGAAVSTGLLPWVLAQWGMQVTLLLLATVLLVGFVVTWLWAPETKALPLVAAGNVGGANEHSVSV.

The Cytoplasmic portion of the chain corresponds to 1-22 (MNTSPVRMDDLPLNRFHCRIAA). The chain crosses the membrane as a helical span at residues 23–43 (LTFGAHLTDGYVLGVIGYAII). The Periplasmic segment spans residues 44–56 (QLTPAMQLTPFMA). The chain crosses the membrane as a helical span at residues 57 to 77 (GMIGGSALLGLFLGSLVLGWI). The Cytoplasmic segment spans residues 78 to 85 (SDHIGRQK). A helical transmembrane segment spans residues 86–106 (IFTFSFLLITLASFLQFFATT). Topologically, residues 107-114 (PEHLIGLR) are periplasmic. Residues 115–135 (ILIGIGLGGDYSVGHTLLAEF) traverse the membrane as a helical segment. Over 136–142 (SPRRHRG) the chain is Cytoplasmic. A helical transmembrane segment spans residues 143–163 (ILLGAFSVVWTVGYVLASIAG). Topologically, residues 164 to 175 (HHFISENPEAWR) are periplasmic. A helical transmembrane segment spans residues 176-196 (WLLASAALPALLITLLRWGTP). Topologically, residues 197-253 (ESPRWLLRQGRFAEAHAIVHRYFGPHVLLGDEVVTATHKHIKTLFSSRYWRRTAFNS) are cytoplasmic. A helical transmembrane segment spans residues 254–274 (VFFVCLVIPWFVIYTWLPTIA). Residues 275–286 (QTIGLEDALTAS) are Periplasmic-facing. The chain crosses the membrane as a helical span at residues 287-307 (LMLNALLIVGALLGLVLTHLL). The Cytoplasmic segment spans residues 308 to 311 (AHRK). Residues 312–332 (FLLGSFLLLAATLVVMACLPS) form a helical membrane-spanning segment. Residues 333–337 (GSSLT) are Periplasmic-facing. A helical transmembrane segment spans residues 338-358 (LLLFVLFSTTISAVSNLVGIL). At 359–369 (PAESFPTDIRS) the chain is on the cytoplasmic side. The helical transmembrane segment at 370–390 (LGVGFATAMSRLGAAVSTGLL) threads the bilayer. The Periplasmic segment spans residues 391-400 (PWVLAQWGMQ). Residues 401–421 (VTLLLLATVLLVGFVVTWLWA) traverse the membrane as a helical segment. The Cytoplasmic portion of the chain corresponds to 422 to 445 (PETKALPLVAAGNVGGANEHSVSV).

This sequence belongs to the major facilitator superfamily. Sugar transporter (TC 2.A.1.1) family.

Its subcellular location is the cell inner membrane. The sequence is that of Inner membrane metabolite transport protein YgcS (ygcS) from Escherichia coli (strain K12).